Here is a 791-residue protein sequence, read N- to C-terminus: Major facilitator superfamily domain-containing protein 6 (791 aa).

At Ala-2 the chain carries N-acetylalanine. Phosphothreonine is present on Thr-10. Residues 22–47 (LADPFNGISREPEPPSNETPSSTETS) form a disordered region. Positions 37–47 (SNETPSSTETS) are enriched in low complexity. The next 6 helical transmembrane spans lie at 73 to 93 (VFYF…PVYY), 105 to 125 (LLVG…GVVA), 132 to 152 (KIVL…IGFV), 286 to 306 (AIFL…ASSV), 335 to 355 (WGLA…EVLI), and 369 to 389 (QIVF…ATQF). The tract at residues 407 to 427 (EIPQVERNNSTESSEETPTTT) is disordered. Over residues 416–427 (STESSEETPTTT) the composition is skewed to low complexity. The next 6 helical transmembrane spans lie at 450-470 (VLFV…FLYW), 479-499 (TTLF…AYFF), 507-527 (IGHI…YIYI), 544-564 (GVTH…AVPP), 579-599 (LGLG…YFGA), and 605-625 (GIGM…WLAV). 2 disordered regions span residues 662–687 (MPRI…NKPA) and 723–791 (LQGT…AGGH). Residues 750–768 (SRNQPSPDAAASQTQTSPA) show a composition bias toward polar residues. Low complexity predominate over residues 782–791 (QQAQLAAGGH).

This sequence belongs to the major facilitator superfamily. MFSD6 family. May interact with HLA-B62. As to expression, widely expressed. Expression levels in peripheral blood mononuclear cells are highly variable between individuals, including no expression at all.

It is found in the membrane. The polypeptide is Major facilitator superfamily domain-containing protein 6 (MFSD6) (Homo sapiens (Human)).